The following is a 98-amino-acid chain: NADH-ubiquinone oxidoreductase chain 4L (98 aa).

3 helical membrane-spanning segments follow: residues 2 to 22 (TLVM…TLMF), 26 to 46 (LMST…MAVI), and 61 to 81 (IIIL…LAMV).

The protein belongs to the complex I subunit 4L family. As to quaternary structure, core subunit of respiratory chain NADH dehydrogenase (Complex I) which is composed of 45 different subunits.

Its subcellular location is the mitochondrion inner membrane. It catalyses the reaction a ubiquinone + NADH + 5 H(+)(in) = a ubiquinol + NAD(+) + 4 H(+)(out). Functionally, core subunit of the mitochondrial membrane respiratory chain NADH dehydrogenase (Complex I) which catalyzes electron transfer from NADH through the respiratory chain, using ubiquinone as an electron acceptor. Part of the enzyme membrane arm which is embedded in the lipid bilayer and involved in proton translocation. The polypeptide is NADH-ubiquinone oxidoreductase chain 4L (MT-ND4L) (Nyctomys sumichrasti (Sumichrast's vesper rat)).